A 212-amino-acid polypeptide reads, in one-letter code: Uridine kinase (212 aa).

ATP is bound at residue 12–19 (GGSGGGKT).

This sequence belongs to the uridine kinase family.

The protein resides in the cytoplasm. It carries out the reaction uridine + ATP = UMP + ADP + H(+). It catalyses the reaction cytidine + ATP = CMP + ADP + H(+). It participates in pyrimidine metabolism; CTP biosynthesis via salvage pathway; CTP from cytidine: step 1/3. The protein operates within pyrimidine metabolism; UMP biosynthesis via salvage pathway; UMP from uridine: step 1/1. The polypeptide is Uridine kinase (Streptococcus pneumoniae serotype 2 (strain D39 / NCTC 7466)).